Here is a 193-residue protein sequence, read N- to C-terminus: Riboflavin kinase (193 aa).

The segment at 1–59 is H-T-H motif-like; sequence MGISQQAASQHLRELEDEGLITRNAEGKGISVMVTDKGRHELLRVYNILHDSLHSRPDH. The segment at 60–193 is riboflavin kinase; the sequence is VEITGTLVSG…TIRIPLEQED (134 aa). 69–74 serves as a coordination point for CDP; it reads GMNEGA. Positions 98 and 100 each coordinate Mg(2+). Residues threonine 156 and glutamate 164 each contribute to the FMN site. 169-172 provides a ligand contact to CDP; the sequence is LDIR.

This sequence belongs to the archaeal riboflavin kinase family. Mg(2+) is required as a cofactor.

It catalyses the reaction riboflavin + CTP = CDP + FMN + H(+). It functions in the pathway cofactor biosynthesis; FMN biosynthesis; FMN from riboflavin (CTP route): step 1/1. Functionally, catalyzes the CTP-dependent phosphorylation of riboflavin (vitamin B2) to form flavin mononucleotide (FMN). This Cenarchaeum symbiosum (strain A) protein is Riboflavin kinase (ribK).